A 777-amino-acid chain; its full sequence is MDSKESLTPGKEENPSSVLTQERGNVMDFCKILRGGATLKVSVSSTSLAAASQSDSKQQRLLVDFPKGSVSNAQQPDLSKAVSLSMGLYMGETETKVMGNDLGFPQQGQISLSSGETDLQLLEESIANLNRSTSVPENPKSSASSSVSAAPKEKEFPKTHSDVSSEQQNLKGQTGSNGGNVKLYTADQSTFDILQDLEFSSGSPGKETNQSPWKSDLLIDENCLLSPLAGEEDSFLLEGNSNEDCKPLILPDTKPKIKDNGDLVLSSSSNVTLPQVKTEKEDFIELCTPGVIKQEKLSTVYCQASFPGANIIGNKMSAISIHGVSTSGGQMYHYDMNTASLSQQQDQKPIFNVIPPIPVGSENWNRCQGSGDDNLTSLGTLNFPGRTVFSNGYSSPSMRPDVSSPPSSSSTATTGPPPKLCLVCSDEASGCHYGVLTCGSCKVFFKRAVEGQHNYLCAGRNDCIIDKIRRKNCPACRYRKCLQAGMNLEARKTKKKIKGIQQATTGVSQETSENPANKTIVPATLPQLTPTLVSLLEVIEPEVLYAGYDSTVPDSTWRIMTTLNMLGGRQVIAAVKWAKAIPGFRNLHLDDQMTLLQYSWMFLMAFALGWRSYRQASSNLLCFAPDLIINEQRMTLPCMYDQCKHMLYVSSELHRLQVSYEEYLCMKTLLLLSSVPKDGLKSQELFDEIRMTYIKELGKAIVKREGNSSQNWQRFYQLTKLLDSMHEVVENLLNYCFQTFLDKTMSIEFPEMLAEIITNQLPKYSNGNIKKLLFHQK.

A compositionally biased stretch (basic and acidic residues) spans 1–14 (MDSKESLTPGKEEN). The interval 1-22 (MDSKESLTPGKEENPSSVLTQE) is disordered. Residues 1–420 (MDSKESLTPG…TATTGPPPKL (420 aa)) form a modulating region. T8 is modified (phosphothreonine). R23 is modified (omega-N-methylarginine). Phosphoserine is present on residues S45, S113, S134, and S141. A disordered region spans residues 130–182 (NRSTSVPENPKSSASSSVSAAPKEKEFPKTHSDVSSEQQNLKGQTGSNGGNVK). The span at 134–150 (SVPENPKSSASSSVSAA) shows a compositional bias: low complexity. Basic and acidic residues predominate over residues 151 to 163 (PKEKEFPKTHSDV). The span at 164 to 174 (SSEQQNLKGQT) shows a compositional bias: polar residues. Phosphoserine occurs at positions 203, 211, and 226. K258 participates in a covalent cross-link: Glycyl lysine isopeptide (Lys-Gly) (interchain with G-Cter in SUMO2). The residue at position 267 (S267) is a Phosphoserine. Residues K277 and K293 each participate in a glycyl lysine isopeptide (Lys-Gly) (interchain with G-Cter in SUMO); alternate cross-link. Glycyl lysine isopeptide (Lys-Gly) (interchain with G-Cter in SUMO2); alternate cross-links involve residues K277 and K293. Residues 394–414 (SSPSMRPDVSSPPSSSSTATT) show a composition bias toward low complexity. The disordered stretch occupies residues 394-415 (SSPSMRPDVSSPPSSSSTATTG). S404 is subject to Phosphoserine. Residue K419 forms a Glycyl lysine isopeptide (Lys-Gly) (interchain with G-Cter in ubiquitin) linkage. 2 consecutive NR C4-type zinc fingers follow at residues 421 to 441 (CLVC…CGSC) and 457 to 481 (CAGR…YRKC). The segment at residues 421–486 (CLVCSDEASG…RYRKCLQAGM (66 aa)) is a DNA-binding region (nuclear receptor). N6-acetyllysine is present on residues K480, K492, K494, and K495. The interval 485–777 (GMNLEARKTK…NIKKLLFHQK (293 aa)) is interaction with CLOCK. Residues 487-523 (NLEARKTKKKIKGIQQATTGVSQETSENPANKTIVPA) are hinge. Positions 524–758 (TLPQLTPTLV…FPEMLAEIIT (235 aa)) constitute an NR LBD domain. Residues 532–697 (LVSLLEVIEP…EIRMTYIKEL (166 aa)) are interaction with CRY1. Residue K703 forms a Glycyl lysine isopeptide (Lys-Gly) (interchain with G-Cter in SUMO) linkage.

It belongs to the nuclear hormone receptor family. NR3 subfamily. Heteromultimeric cytoplasmic complex with HSP90AA1, HSPA1A/HSPA1B, and FKBP5 or another immunophilin such as PPID, STIP1, or the immunophilin homolog PPP5C. Upon ligand binding FKBP5 dissociates from the complex and FKBP4 takes its place, thereby linking the complex to dynein and mediating transport to the nucleus, where the complex dissociates. Probably forms a complex composed of chaperones HSP90 and HSP70, co-chaperones CDC37, PPP5C, TSC1 and client protein TSC2, CDK4, AKT, RAF1 and NR3C1; this complex does not contain co-chaperones STIP1/HOP and PTGES3/p23. Directly interacts with UNC45A. Binds to DNA as a homodimer, and as heterodimer with NR3C2 or the retinoid X receptor. Binds STAT5A and STAT5B homodimers and heterodimers. Interacts with NRIP1, POU2F1, POU2F2 and TRIM28. Interacts with several coactivator complexes, including the SMARCA4 complex, CREBBP/EP300, TADA2L (Ada complex) and p160 coactivators such as NCOA2 and NCOA6. Interaction with BAG1 inhibits transactivation. Interacts with HEXIM1 and TGFB1I1. Interacts with NCOA1. Interacts with NCOA3, SMARCA4, SMARCC1, SMARCD1, and SMARCE1. Interacts with CLOCK, CRY1 and CRY2 in a ligand-dependent fashion. Interacts with CIART. Interacts with RWDD3. Interacts with UBE2I/UBC9 and this interaction is enhanced in the presence of RWDD3. Interacts with GRIP1. Interacts with NR4A3 (via nuclear receptor DNA-binding domain), represses transcription activity of NR4A3 on the POMC promoter Nur response element (NurRE). Directly interacts with PNRC2 to attract and form a complex with UPF1 and DCP1A; the interaction leads to rapid mRNA degradation. Interacts with GSK3B. Interacts with FNIP1 and FNIP2. Interacts (via C-terminus) with HNRNPU (via C-terminus). Interacts with MCM3AP. Interacts (via domain NR LBD) with HSP90AA1 and HSP90AB1. In the absence of hormonal ligand, interacts with TACC1. Interacts (via NR LBD domain) with ZNF764 (via KRAB domain); the interaction regulates transcription factor activity of NR3C1 by directing its actions toward certain biologic pathways. Acetylation by CLOCK reduces its binding to glucocorticoid response elements and its transcriptional activity. Post-translationally, increased proteasome-mediated degradation in response to glucocorticoids. In terms of processing, phosphorylated in the absence of hormone; becomes hyperphosphorylated in the presence of glucocorticoid. The Ser-203, Ser-226 and Ser-404-phosphorylated forms are mainly cytoplasmic, and the Ser-211-phosphorylated form is nuclear. Phosphorylation at Ser-211 increases transcriptional activity. Phosphorylation at Ser-203, Ser-226 and Ser-404 decreases signaling capacity. Phosphorylation at Ser-404 may protect from glucocorticoid-induced apoptosis. Phosphorylation at Ser-203 and Ser-211 is not required in regulation of chromosome segregation. May be dephosphorylated by PPP5C, attenuates NR3C1 action. Ubiquitinated by UBR5, leading to its degradation: UBR5 specifically recognizes and binds ligand-bound NR3C1 when it is not associated with coactivators (NCOAs). In presence of NCOAs, the UBR5-degron is not accessible, preventing its ubiquitination and degradation. Post-translationally, sumoylation at Lys-277 and Lys-293 negatively regulates its transcriptional activity. Sumoylation at Lys-703 positively regulates its transcriptional activity in the presence of RWDD3. Sumoylation at Lys-277 and Lys-293 is dispensable whereas sumoylation at Lys-703 is critical for the stimulatory effect of RWDD3 on its transcriptional activity. Heat shock increases sumoylation in a RWDD3-dependent manner.

The protein resides in the cytoplasm. It localises to the nucleus. Its subcellular location is the mitochondrion. The protein localises to the cytoskeleton. It is found in the spindle. The protein resides in the microtubule organizing center. It localises to the centrosome. Its subcellular location is the chromosome. The protein localises to the nucleoplasm. Functionally, receptor for glucocorticoids (GC). Has a dual mode of action: as a transcription factor that binds to glucocorticoid response elements (GRE), both for nuclear and mitochondrial DNA, and as a modulator of other transcription factors. Affects inflammatory responses, cellular proliferation and differentiation in target tissues. Involved in chromatin remodeling. Plays a role in rapid mRNA degradation by binding to the 5' UTR of target mRNAs and interacting with PNRC2 in a ligand-dependent manner which recruits the RNA helicase UPF1 and the mRNA-decapping enzyme DCP1A, leading to RNA decay. Could act as a coactivator for STAT5-dependent transcription upon growth hormone (GH) stimulation and could reveal an essential role of hepatic GR in the control of body growth. Mediates glucocorticoid-induced apoptosis. Promotes accurate chromosome segregation during mitosis. May act as a tumor suppressor. May play a negative role in adipogenesis through the regulation of lipolytic and antilipogenic gene expression. This chain is Glucocorticoid receptor (NR3C1), found in Saimiri boliviensis boliviensis (Bolivian squirrel monkey).